The following is a 1016-amino-acid chain: Protein kinase C-like 2 (1016 aa).

In terms of domain architecture, REM-1 1 spans 1–68 (MDMIDEAITE…LEKLKLRKNG (68 aa)). The disordered stretch occupies residues 68 to 101 (GVRKSNSEKPSVGIEKNPSFSTTKSAKSFSSTSS). Positions 86–101 (SFSTTKSAKSFSSTSS) are enriched in low complexity. The region spanning 111–188 (NYDTPLTISK…LKRYHDLHIE (78 aa)) is the REM-1 2 domain. The C2 domain maps to 195–307 (PSTESRGNLN…VEKQRRKKVE (113 aa)). Phorbol-ester/DAG-type zinc fingers lie at residues 405 to 453 (GHKF…VTKC) and 473 to 523 (PHHF…PDFC). The disordered stretch occupies residues 543–602 (YKAQQHKQKSSHHKHHHHKKSKSSSSKHKENDKASVSITTTTTPSITPADPVPTSPKPLA). Residues 546–568 (QQHKQKSSHHKHHHHKKSKSSSS) show a composition bias toward basic residues. Over residues 579–590 (SITTTTTPSITP) the composition is skewed to low complexity. Residues 683–942 (FTFLSVLGKG…AEDVMTHPFF (260 aa)) form the Protein kinase domain. ATP contacts are provided by residues 689-697 (LGKGNFGKV) and Lys-712. Asp-808 functions as the Proton acceptor in the catalytic mechanism. One can recognise an AGC-kinase C-terminal domain in the interval 943–1013 (SNINWDDIYH…SCEDDKPSTT (71 aa)). Residue Thr-984 is modified to Phosphothreonine.

This sequence belongs to the protein kinase superfamily. AGC Ser/Thr protein kinase family. PKC subfamily. In terms of assembly, interacts with rho2.

The enzyme catalyses L-seryl-[protein] + ATP = O-phospho-L-seryl-[protein] + ADP + H(+). It catalyses the reaction L-threonyl-[protein] + ATP = O-phospho-L-threonyl-[protein] + ADP + H(+). Its function is as follows. Involved in the control of the cell shape. Target of the inhibitor staurosporine. This Schizosaccharomyces pombe (strain 972 / ATCC 24843) (Fission yeast) protein is Protein kinase C-like 2 (pck2).